Consider the following 411-residue polypeptide: Tyrosine--tRNA ligase (411 aa).

Tyr34 is a binding site for L-tyrosine. Positions 39-48 (CTATSLHIGS) match the 'HIGH' region motif. L-tyrosine contacts are provided by Tyr171 and Gln175. Residues 231 to 235 (KMGKT) carry the 'KMSKS' region motif. Lys234 contacts ATP. The S4 RNA-binding domain maps to 345–411 (ISAYELFHEA…GKKRHILVRV (67 aa)).

The protein belongs to the class-I aminoacyl-tRNA synthetase family. TyrS type 1 subfamily. Homodimer.

Its subcellular location is the cytoplasm. It carries out the reaction tRNA(Tyr) + L-tyrosine + ATP = L-tyrosyl-tRNA(Tyr) + AMP + diphosphate + H(+). Its function is as follows. Catalyzes the attachment of tyrosine to tRNA(Tyr) in a two-step reaction: tyrosine is first activated by ATP to form Tyr-AMP and then transferred to the acceptor end of tRNA(Tyr). This is Tyrosine--tRNA ligase from Rickettsia africae (strain ESF-5).